A 342-amino-acid polypeptide reads, in one-letter code: MAEHDYHEDYGFSSFNDSSQEEHQDFLQFSKVFLPCMYLVVFVCGLVGNSLVLVISIFYHKLQSLTDVFLVNLPLADLVFVCTLPFWAYAGIHEWVFGQVMCKSLLGIYTINFYTSMLILTCITVDRFIVVVKATKAYNQQAKRMTWGKVTSLLIWVISLLVSLPQIIYGNVFNLDKLICGYHDEAISTVVLATQMTLGFFLPLLTMIVCYSVIIKTLLHAGGFQKHRSLKIIFLVMAVFLLTQMPFNLMKFIRSTHWEYYAMTSFHYTIMVTEAIAYLRACLNPVLYAFVSLKFRKNFWKLVKDIGCLPYLGVSHQWKSSEDNSKTFSASHNVEATSMFQL.

The Extracellular segment spans residues 1 to 32 (MAEHDYHEDYGFSSFNDSSQEEHQDFLQFSKV). N-linked (GlcNAc...) asparagine glycosylation is present at N16. The helical transmembrane segment at 33–59 (FLPCMYLVVFVCGLVGNSLVLVISIFY) threads the bilayer. Over 60–68 (HKLQSLTDV) the chain is Cytoplasmic. The helical transmembrane segment at 69–89 (FLVNLPLADLVFVCTLPFWAY) threads the bilayer. The Extracellular portion of the chain corresponds to 90–103 (AGIHEWVFGQVMCK). A disulfide bridge links C102 with C180. Residues 104–125 (SLLGIYTINFYTSMLILTCITV) form a helical membrane-spanning segment. At 126 to 143 (DRFIVVVKATKAYNQQAK) the chain is on the cytoplasmic side. Residues 144-164 (RMTWGKVTSLLIWVISLLVSL) form a helical membrane-spanning segment. The Extracellular segment spans residues 165–187 (PQIIYGNVFNLDKLICGYHDEAI). The helical transmembrane segment at 188 to 215 (STVVLATQMTLGFFLPLLTMIVCYSVII) threads the bilayer. Topologically, residues 216 to 231 (KTLLHAGGFQKHRSLK) are cytoplasmic. The chain crosses the membrane as a helical span at residues 232-259 (IIFLVMAVFLLTQMPFNLMKFIRSTHWE). Residues 260–275 (YYAMTSFHYTIMVTEA) are Extracellular-facing. Residues 276–293 (IAYLRACLNPVLYAFVSL) traverse the membrane as a helical segment. The Cytoplasmic segment spans residues 294–342 (KFRKNFWKLVKDIGCLPYLGVSHQWKSSEDNSKTFSASHNVEATSMFQL).

It belongs to the G-protein coupled receptor 1 family. As to expression, expressed in lymphoid tissues and activated T cells.

The protein resides in the cell membrane. Its function is as follows. Receptor for the C-X-C chemokine CXCL16. Used as a coreceptor by SIVs and by strains of HIV-2 and m-tropic HIV-1. This Homo sapiens (Human) protein is C-X-C chemokine receptor type 6 (CXCR6).